Reading from the N-terminus, the 132-residue chain is ATP synthase epsilon chain (132 aa).

Belongs to the ATPase epsilon chain family. As to quaternary structure, F-type ATPases have 2 components, CF(1) - the catalytic core - and CF(0) - the membrane proton channel. CF(1) has five subunits: alpha(3), beta(3), gamma(1), delta(1), epsilon(1). CF(0) has three main subunits: a, b and c.

The protein localises to the cell inner membrane. Functionally, produces ATP from ADP in the presence of a proton gradient across the membrane. The polypeptide is ATP synthase epsilon chain (atpC) (Aquifex aeolicus (strain VF5)).